The primary structure comprises 884 residues: Protein P (884 aa).

The segment at 1 to 184 is terminal protein domain (TP); it reads MHPFSRLFRN…GKPYSWEHRQ (184 aa). The segment at 185–387 is spacer; the sequence is LVQHNGQQHK…YCIHHIVSSL (203 aa). The disordered stretch occupies residues 299 to 345; sequence RNSGHTTWFSSASNSNKSRSREKAYSSNSTSKRYSPPLNYEKSDFSS. The interval 388–729 is polymerase/reverse transcriptase domain (RT); the sequence is DDWGPCTVTG…YEELWPVVRQ (342 aa). The 242-residue stretch at 398–639 folds into the Reverse transcriptase domain; sequence DVTIKSPRTP…NHLHFMGYVI (242 aa). Mg(2+)-binding residues include aspartate 470, aspartate 590, and aspartate 591.

This sequence belongs to the hepadnaviridae P protein family.

It carries out the reaction DNA(n) + a 2'-deoxyribonucleoside 5'-triphosphate = DNA(n+1) + diphosphate. The enzyme catalyses Endonucleolytic cleavage to 5'-phosphomonoester.. Its activity is regulated as follows. Activated by host HSP70 and HSP40 in vitro to be able to bind the epsilon loop of the pgRNA. Because deletion of the RNase H region renders the protein partly chaperone-independent, the chaperones may be needed indirectly to relieve occlusion of the RNA-binding site by this domain. Inhibited by several reverse-transcriptase inhibitors: Lamivudine, Adefovir and Entecavir. Its function is as follows. Multifunctional enzyme that converts the viral RNA genome into dsDNA in viral cytoplasmic capsids. This enzyme displays a DNA polymerase activity that can copy either DNA or RNA templates, and a ribonuclease H (RNase H) activity that cleaves the RNA strand of RNA-DNA heteroduplexes in a partially processive 3'- to 5'-endonucleasic mode. Neo-synthesized pregenomic RNA (pgRNA) are encapsidated together with the P protein, and reverse-transcribed inside the nucleocapsid. Initiation of reverse-transcription occurs first by binding the epsilon loop on the pgRNA genome, and is initiated by protein priming, thereby the 5'-end of (-)DNA is covalently linked to P protein. Partial (+)DNA is synthesized from the (-)DNA template and generates the relaxed circular DNA (RC-DNA) genome. After budding and infection, the RC-DNA migrates in the nucleus, and is converted into a plasmid-like covalently closed circular DNA (cccDNA). The activity of P protein does not seem to be necessary for cccDNA generation, and is presumably released from (+)DNA by host nuclear DNA repair machinery. In Woodchuck hepatitis B virus (isolate 7) (WHV), this protein is Protein P.